A 1005-amino-acid chain; its full sequence is Protein TIC 214 (1005 aa).

6 helical membrane-spanning segments follow: residues 25–45, 67–87, 91–111, 131–151, 177–197, and 304–324; these read VGLY…LFLL, FFTG…HLAL, HTIL…SNSG, SFQL…SVLG, FVGW…VFVW, and LFSI…PLLY. Disordered regions lie at residues 457 to 481 and 767 to 833; these read VEEG…EREE and KKKK…KRKQ. A compositionally biased stretch (basic residues) spans 783-810; sequence KQKKVKSKQKKVKSKQKKVKSKQKKVKS. Residues 811–824 show a composition bias toward basic and acidic residues; it reads KQNEIKSKQNEIKS.

This sequence belongs to the TIC214 family. In terms of assembly, part of the Tic complex.

It is found in the plastid. The protein resides in the chloroplast inner membrane. Its function is as follows. Involved in protein precursor import into chloroplasts. May be part of an intermediate translocation complex acting as a protein-conducting channel at the inner envelope. The chain is Protein TIC 214 from Oenothera berteroana (Bertero's evening primrose).